The primary structure comprises 493 residues: Neuronal acetylcholine receptor subunit alpha-6 (493 aa).

The N-terminal stretch at 1-30 (MLNGWGRGDLRSGLCLWICGFLAFFKGSRG) is a signal peptide. At 31 to 240 (CVSEEQLFHT…TYSFYIRRLP (210 aa)) the chain is on the extracellular side. N-linked (GlcNAc...) asparagine glycans are attached at residues N54 and N171. 2 disulfides stabilise this stretch: C158–C172 and C222–C223. 3 helical membrane passes run 241 to 265 (MFYT…FYLP), 272 to 290 (VTLC…LVIT), and 306 to 327 (YLLF…VLNI). The Cytoplasmic portion of the chain corresponds to 328–464 (HYRTPATHTM…WKYMAMVVDR (137 aa)). A Phosphoserine modification is found at S401. Residues 465-484 (VFLWVFIIVCVFGTVGLFLQ) form a helical membrane-spanning segment.

The protein belongs to the ligand-gated ion channel (TC 1.A.9) family. Acetylcholine receptor (TC 1.A.9.1) subfamily. Alpha-6/CHRNA6 sub-subfamily. As to quaternary structure, neuronal AChR is composed of two different types of subunits: alpha and non-alpha (beta). CHRNA6/alpha-6 subunit can be combined to CHRNB2/beta-2 and CHRNA4/alpha-4 to give rise to functional receptors. Interacts with LYPD6. In terms of tissue distribution, predominantly expressed in only a few brain areas, including dopaminergic neurons, norepirephrine neurons and cells of the visual system.

It localises to the synaptic cell membrane. It catalyses the reaction Ca(2+)(in) = Ca(2+)(out). It carries out the reaction K(+)(in) = K(+)(out). The catalysed reaction is Na(+)(in) = Na(+)(out). Its activity is regulated as follows. Activated by a myriad of ligands such as acetylcholine, cytisine and nicotine. CHRNA6 nAChR activity is inhibited by the antagonists alpha-conotoxin MII and PIA, a small disulfide-constrained peptides from cone snails. Functionally, component of neuronal acetylcholine receptors (nAChRs) that function as pentameric, ligand-gated cation channels with high calcium permeability among other activities. nAChRs are excitatory neurotrasnmitter receptors formed by a collection of nAChR subunits known to mediate synaptic transmission in the nervous system and the neuromuscular junction. Each nAchR subunit confers differential attributes to channel properties, including activation, deactivation and desensitization kinetics, pH sensitivity, cation permeability, and binding to allosteric modulators. CHRNA6 forms pentameric channels with CHRNB2 and CHRNA4 that exhibit high sensitivity to ACh and nicotine and are predominantly expressed in only a few brain areas, including dopaminergic neurons, norepirephrine neurons and cells of the visual system. nAChrs containing CHRNA6 subunits mediate endogenous cholinergic modulation of dopamine and gamma-aminobutyric acid (GABA) release in response to nicotine at nerve terminals. The chain is Neuronal acetylcholine receptor subunit alpha-6 (Chrna6) from Rattus norvegicus (Rat).